The sequence spans 383 residues: D-alanine--D-alanine ligase (383 aa).

In terms of domain architecture, ATP-grasp spans 169–373; the sequence is KALLRAAGLP…YPQLVDRLVR (205 aa). 196–251 provides a ligand contact to ATP; it reads QERLGLPVFVKPARGGSSIGISRVEAWADLDTAIKAARASDPKVLVESAIVGREIE. Mg(2+)-binding residues include aspartate 327, glutamate 340, and asparagine 342.

Belongs to the D-alanine--D-alanine ligase family. Requires Mg(2+) as cofactor. The cofactor is Mn(2+).

The protein resides in the cytoplasm. It carries out the reaction 2 D-alanine + ATP = D-alanyl-D-alanine + ADP + phosphate + H(+). Its pathway is cell wall biogenesis; peptidoglycan biosynthesis. In terms of biological role, cell wall formation. In Frankia casuarinae (strain DSM 45818 / CECT 9043 / HFP020203 / CcI3), this protein is D-alanine--D-alanine ligase.